The sequence spans 866 residues: Paramyosin (866 aa).

The segment at 1 to 22 (MMNHDTESHVKISRTIYRGVSP) is nonhelical region. Residues 23–839 (STTRLESRVR…AERTVTVRRV (817 aa)) are a coiled coil. The tract at residues 840–866 (GPGGRAVSVARELSVTSNRGMRATSMM) is nonhelical region.

This sequence belongs to the paramyosin family. In terms of assembly, homodimer.

The protein resides in the cytoplasm. Its subcellular location is the myofibril. Functionally, paramyosin is a major structural component of many thick filaments isolated from invertebrate muscles. In Schistosoma japonicum (Blood fluke), this protein is Paramyosin.